We begin with the raw amino-acid sequence, 62 residues long: Snaclec aspercetin subunit beta (62 aa).

Cys-2 and Cys-13 form a disulfide bridge. Residues Tyr-9–Gly-62 enclose the C-type lectin domain.

Belongs to the snaclec family. Heterodimer; disulfide-linked. Expressed by the venom gland.

Its subcellular location is the secreted. Its function is as follows. Snaclec that binds to von Willebrand factor (VWF) and induces its interaction with GPIbalpha (GP1BA) (via the vWF A1 domain), resulting in platelet aggregation. Intramuscular and intravenous injections in mice induce a dose-dependent drop in platelet count (thrombocytopenia). Pretreatment by intravenous injection by this protein in mice potentiates the hemorrhagic lesion in the skin provoked by the metalloproteinase BaP1 intradermally injected. This result is not observed when both BaP1 and this protein are injected simultaneously. The sequence is that of Snaclec aspercetin subunit beta from Bothrops asper (Terciopelo).